Here is a 217-residue protein sequence, read N- to C-terminus: UPF0502 protein ESA_02280 (217 aa).

Belongs to the UPF0502 family.

The polypeptide is UPF0502 protein ESA_02280 (Cronobacter sakazakii (strain ATCC BAA-894) (Enterobacter sakazakii)).